The sequence spans 278 residues: Undecaprenyl-diphosphatase (278 aa).

The next 8 membrane-spanning stretches (helical) occupy residues 3 to 23, 42 to 62, 88 to 108, 112 to 132, 152 to 172, 190 to 210, 225 to 245, and 253 to 273; these read YILI…IPIS, VAYS…IIYF, FLVI…LFVI, ILGL…IIIY, IIIV…RSGI, LSFI…VLFS, GLLI…NALL, and VVVL…LSGI.

The protein belongs to the UppP family.

The protein resides in the cell membrane. It catalyses the reaction di-trans,octa-cis-undecaprenyl diphosphate + H2O = di-trans,octa-cis-undecaprenyl phosphate + phosphate + H(+). Functionally, catalyzes the dephosphorylation of undecaprenyl diphosphate (UPP). This chain is Undecaprenyl-diphosphatase, found in Saccharolobus islandicus (strain M.16.4 / Kamchatka #3) (Sulfolobus islandicus).